A 392-amino-acid chain; its full sequence is Phosphoglycerate kinase (392 aa).

Residues 21–23 (DMN), Arg-36, 59–62 (HLGR), Arg-114, and Arg-147 contribute to the substrate site. ATP is bound by residues Lys-198, Glu-320, and 346-349 (GGDT).

This sequence belongs to the phosphoglycerate kinase family. As to quaternary structure, monomer.

It is found in the cytoplasm. The enzyme catalyses (2R)-3-phosphoglycerate + ATP = (2R)-3-phospho-glyceroyl phosphate + ADP. It functions in the pathway carbohydrate degradation; glycolysis; pyruvate from D-glyceraldehyde 3-phosphate: step 2/5. The chain is Phosphoglycerate kinase (pgk) from Neisseria meningitidis serogroup B (strain ATCC BAA-335 / MC58).